A 544-amino-acid chain; its full sequence is Zinc finger protein 502 (544 aa).

Residue Lys43 forms a Glycyl lysine isopeptide (Lys-Gly) (interchain with G-Cter in SUMO2) linkage. 14 C2H2-type zinc fingers span residues 155-177 (WKCNECGKTFTQSSSLTQHQRTH), 183-205 (YTCEECGKAFSRSSFLVQHQRIH), 211-233 (YGCEQCGKTFRCRSFLTQHQRIH), 239-261 (YKCNECGNSFRNHSHLTEHQRIH), 267-289 (YKCNRCGKAFNQNTHLIHHQRIH), 295-317 (YICSECGSSFRKHSNLTQHQRIH), 323-345 (HKCDECGKTFQTKANLSQHQRIH), 351-373 (YKCKECGKAFCQSPSLIKHQRIH), 379-401 (YKCKECGKAFTQSTPLTKHQRIH), 407-429 (YKCSECGKAFIQSICLIRHQRSH), 435-457 (YKCNECGKGFNQNTCLTQHMRIH), 463-485 (YKCKECGKAFAHSSSLTEHHRTH), 491-513 (YKCSECEKTFRKYAHLSEHYRIH), and 519-541 (YECIECGKFFRHSSVLFRHQKLH).

The protein belongs to the krueppel C2H2-type zinc-finger protein family. In terms of assembly, (Microbial infection) Interacts with human respiratory syncytial virus (HRSV) matrix protein; this interaction probably facilitates viral release.

Its subcellular location is the nucleus. In terms of biological role, may be involved in transcriptional regulation. The protein is Zinc finger protein 502 (ZNF502) of Homo sapiens (Human).